The primary structure comprises 94 residues: MGRSLKKGPYVDPKLLKKIRELNEKGEKKIIKTWSRRSVIVPEMVGHTIAVYNGRKHIPVYITENMIGHRLGEFAPTRTFTGHRIPTARITAIK.

It belongs to the universal ribosomal protein uS19 family.

In terms of biological role, protein S19 forms a complex with S13 that binds strongly to the 16S ribosomal RNA. The sequence is that of Small ribosomal subunit protein uS19 from Dictyoglomus turgidum (strain DSM 6724 / Z-1310).